The primary structure comprises 752 residues: DNA ligase (752 aa).

Residues 48–52 (DADYD), 97–98 (SL), and Glu-131 each bind NAD(+). Lys-133 functions as the N6-AMP-lysine intermediate in the catalytic mechanism. 4 residues coordinate NAD(+): Arg-154, Glu-189, Lys-305, and Lys-329. 4 residues coordinate Zn(2+): Cys-434, Cys-437, Cys-452, and Cys-458. Basic and acidic residues predominate over residues 599–615 (ADEGRRASLQPQRDKAW). The segment at 599-618 (ADEGRRASLQPQRDKAWADT) is disordered. Residues 673 to 752 (ATQSAVAGLT…EQWLDRIGDA (80 aa)) enclose the BRCT domain.

The protein belongs to the NAD-dependent DNA ligase family. LigA subfamily. Mg(2+) serves as cofactor. It depends on Mn(2+) as a cofactor.

It catalyses the reaction NAD(+) + (deoxyribonucleotide)n-3'-hydroxyl + 5'-phospho-(deoxyribonucleotide)m = (deoxyribonucleotide)n+m + AMP + beta-nicotinamide D-nucleotide.. Its function is as follows. DNA ligase that catalyzes the formation of phosphodiester linkages between 5'-phosphoryl and 3'-hydroxyl groups in double-stranded DNA using NAD as a coenzyme and as the energy source for the reaction. It is essential for DNA replication and repair of damaged DNA. This chain is DNA ligase, found in Jannaschia sp. (strain CCS1).